The sequence spans 202 residues: Hydrogenase expression/formation protein HoxM (202 aa).

Residues glutamate 15, aspartate 61, and histidine 92 each coordinate Ni(2+).

This sequence belongs to the peptidase A31 family.

Its function is as follows. Absolutely required for hydrogenase activity. Mediates the attachment of hydrogenase to the bacterial membrane; attachment is a requirement for enzymatic activity. The chain is Hydrogenase expression/formation protein HoxM (hoxM) from Cupriavidus necator (strain ATCC 17699 / DSM 428 / KCTC 22496 / NCIMB 10442 / H16 / Stanier 337) (Ralstonia eutropha).